A 261-amino-acid chain; its full sequence is Bidirectional sugar transporter SWEET1b (261 aa).

The Extracellular segment spans residues 1 to 6 (MEDLAK). The chain crosses the membrane as a helical span at residues 7–27 (FLFGVSGNVIALFLFLSPVPT). One can recognise a MtN3/slv 1 domain in the interval 7 to 95 (FLFGVSGNVI…VVFLVFASTH (89 aa)). Residues 28-42 (FWRIIRRKSTEDFSG) are Cytoplasmic-facing. The helical transmembrane segment at 43 to 63 (VPYNMTLINCLLSAWYGLPFV) threads the bilayer. Residues 64-71 (SPNNILVS) are Extracellular-facing. A helical transmembrane segment spans residues 72-92 (TINGAGAVIETAYVVVFLVFA). The Cytoplasmic segment spans residues 93-101 (STHKTRLRT). The helical transmembrane segment at 102–122 (LGLAAAVASVFAAVALVSLLA) threads the bilayer. Topologically, residues 123 to 129 (LHGQHRK) are extracellular. The chain crosses the membrane as a helical span at residues 130–150 (LLCGVAATVCSICMYASPLSI). Residues 133–215 (GVAATVCSIC…VLYAIYRNNK (83 aa)) enclose the MtN3/slv 2 domain. The Cytoplasmic portion of the chain corresponds to 151–164 (MRLVIKTKSVEYMP). The chain crosses the membrane as a helical span at residues 165 to 185 (FLMSLAVFLCGTSWFIYGLLG). Topologically, residues 186–189 (RDPF) are extracellular. Residues 190 to 210 (VTIPNGCGSFLGAVQLVLYAI) traverse the membrane as a helical segment. Topologically, residues 211–261 (YRNNKGAGGGSGGKQAGDDDVEMAEGRNNKVADGGAADDDSTAGGKAGTEV) are cytoplasmic. Positions 218–261 (GGGSGGKQAGDDDVEMAEGRNNKVADGGAADDDSTAGGKAGTEV) are disordered.

Belongs to the SWEET sugar transporter family. Forms homodimers. Highly expressed in leaves. Expressed at very low levels in roots, stems and panicles.

It localises to the cell membrane. The enzyme catalyses D-glucose(out) = D-glucose(in). The catalysed reaction is D-galactose(in) = D-galactose(out). In terms of biological role, mediates transport of sugars across the plasma membrane. Can transport glucose and galactose, but not fructose, mannose and sucrose. This is Bidirectional sugar transporter SWEET1b (SWEET1B) from Oryza sativa subsp. japonica (Rice).